Reading from the N-terminus, the 392-residue chain is S-adenosylmethionine synthase (392 aa).

Residue His-20 participates in ATP binding. Residue Asp-22 coordinates Mg(2+). Glu-48 contributes to the K(+) binding site. The L-methionine site is built by Glu-61 and Gln-106. The tract at residues 106-116 is flexible loop; sequence QSRDIINAIEK. Residues 171–173, Asp-248, 254–255, Ala-271, and Lys-275 contribute to the ATP site; these read DSK and RK. Asp-248 contributes to the L-methionine binding site. Residue Lys-279 participates in L-methionine binding.

The protein belongs to the AdoMet synthase family. As to quaternary structure, homotetramer; dimer of dimers. The cofactor is Mg(2+). It depends on K(+) as a cofactor.

It is found in the cytoplasm. The enzyme catalyses L-methionine + ATP + H2O = S-adenosyl-L-methionine + phosphate + diphosphate. Its pathway is amino-acid biosynthesis; S-adenosyl-L-methionine biosynthesis; S-adenosyl-L-methionine from L-methionine: step 1/1. In terms of biological role, catalyzes the formation of S-adenosylmethionine (AdoMet) from methionine and ATP. The overall synthetic reaction is composed of two sequential steps, AdoMet formation and the subsequent tripolyphosphate hydrolysis which occurs prior to release of AdoMet from the enzyme. The chain is S-adenosylmethionine synthase from Borreliella afzelii (strain PKo) (Borrelia afzelii).